A 130-amino-acid polypeptide reads, in one-letter code: Large ribosomal subunit protein eL22 (130 aa).

It belongs to the eukaryotic ribosomal protein eL22 family.

This is Large ribosomal subunit protein eL22 (rpl-22) from Caenorhabditis elegans.